The following is a 343-amino-acid chain: N-acetyl-gamma-glutamyl-phosphate reductase (343 aa).

C147 is an active-site residue.

Belongs to the NAGSA dehydrogenase family. Type 1 subfamily.

It localises to the cytoplasm. It catalyses the reaction N-acetyl-L-glutamate 5-semialdehyde + phosphate + NADP(+) = N-acetyl-L-glutamyl 5-phosphate + NADPH + H(+). It participates in amino-acid biosynthesis; L-arginine biosynthesis; N(2)-acetyl-L-ornithine from L-glutamate: step 3/4. Its function is as follows. Catalyzes the NADPH-dependent reduction of N-acetyl-5-glutamyl phosphate to yield N-acetyl-L-glutamate 5-semialdehyde. The protein is N-acetyl-gamma-glutamyl-phosphate reductase of Listeria welshimeri serovar 6b (strain ATCC 35897 / DSM 20650 / CCUG 15529 / CIP 8149 / NCTC 11857 / SLCC 5334 / V8).